Here is a 293-residue protein sequence, read N- to C-terminus: Glycine--tRNA ligase alpha subunit (293 aa).

Belongs to the class-II aminoacyl-tRNA synthetase family. In terms of assembly, tetramer of two alpha and two beta subunits.

It localises to the cytoplasm. The catalysed reaction is tRNA(Gly) + glycine + ATP = glycyl-tRNA(Gly) + AMP + diphosphate. The protein is Glycine--tRNA ligase alpha subunit of Prochlorococcus marinus (strain MIT 9211).